The following is a 199-amino-acid chain: Small ribosomal subunit protein eS1 (199 aa).

This sequence belongs to the eukaryotic ribosomal protein eS1 family.

The sequence is that of Small ribosomal subunit protein eS1 from Pyrococcus horikoshii (strain ATCC 700860 / DSM 12428 / JCM 9974 / NBRC 100139 / OT-3).